The sequence spans 264 residues: Thymidylate synthase (264 aa).

Arginine 21 provides a ligand contact to dUMP. A (6R)-5,10-methylene-5,6,7,8-tetrahydrofolate-binding site is contributed by histidine 51. The Nucleophile role is filled by cysteine 146. DUMP is bound by residues 166 to 169 (RSAD), asparagine 177, and 207 to 209 (HIY). Aspartate 169 provides a ligand contact to (6R)-5,10-methylene-5,6,7,8-tetrahydrofolate. Alanine 263 serves as a coordination point for (6R)-5,10-methylene-5,6,7,8-tetrahydrofolate.

The protein belongs to the thymidylate synthase family. Bacterial-type ThyA subfamily. In terms of assembly, homodimer.

The protein resides in the cytoplasm. It catalyses the reaction dUMP + (6R)-5,10-methylene-5,6,7,8-tetrahydrofolate = 7,8-dihydrofolate + dTMP. It participates in pyrimidine metabolism; dTTP biosynthesis. Catalyzes the reductive methylation of 2'-deoxyuridine-5'-monophosphate (dUMP) to 2'-deoxythymidine-5'-monophosphate (dTMP) while utilizing 5,10-methylenetetrahydrofolate (mTHF) as the methyl donor and reductant in the reaction, yielding dihydrofolate (DHF) as a by-product. This enzymatic reaction provides an intracellular de novo source of dTMP, an essential precursor for DNA biosynthesis. The polypeptide is Thymidylate synthase (Brucella canis (strain ATCC 23365 / NCTC 10854 / RM-666)).